The following is a 557-amino-acid chain: Dihydroxy-acid dehydratase (557 aa).

[2Fe-2S] cluster is bound at residue Cys47. Asp79 is a Mg(2+) binding site. Cys120 lines the [2Fe-2S] cluster pocket. Mg(2+) contacts are provided by Asp121 and Lys122. Lys122 is modified (N6-carboxylysine). Position 192 (Cys192) interacts with [2Fe-2S] cluster. Glu444 lines the Mg(2+) pocket. The active-site Proton acceptor is Ser470.

It belongs to the IlvD/Edd family. In terms of assembly, homodimer. Requires [2Fe-2S] cluster as cofactor. Mg(2+) serves as cofactor.

It catalyses the reaction (2R)-2,3-dihydroxy-3-methylbutanoate = 3-methyl-2-oxobutanoate + H2O. The catalysed reaction is (2R,3R)-2,3-dihydroxy-3-methylpentanoate = (S)-3-methyl-2-oxopentanoate + H2O. It participates in amino-acid biosynthesis; L-isoleucine biosynthesis; L-isoleucine from 2-oxobutanoate: step 3/4. Its pathway is amino-acid biosynthesis; L-valine biosynthesis; L-valine from pyruvate: step 3/4. Functions in the biosynthesis of branched-chain amino acids. Catalyzes the dehydration of (2R,3R)-2,3-dihydroxy-3-methylpentanoate (2,3-dihydroxy-3-methylvalerate) into 2-oxo-3-methylpentanoate (2-oxo-3-methylvalerate) and of (2R)-2,3-dihydroxy-3-methylbutanoate (2,3-dihydroxyisovalerate) into 2-oxo-3-methylbutanoate (2-oxoisovalerate), the penultimate precursor to L-isoleucine and L-valine, respectively. The chain is Dihydroxy-acid dehydratase from Parasynechococcus marenigrum (strain WH8102).